The sequence spans 87 residues: RNA-binding protein Hfq (87 aa).

Positions 9–68 (DPFLNALRRERIPVSIYLVNGIKLQGQIESFDQFVILLKNTVSQMVYKHAISTVVPARAV) constitute a Sm domain.

It belongs to the Hfq family. In terms of assembly, homohexamer.

In terms of biological role, RNA chaperone that binds small regulatory RNA (sRNAs) and mRNAs to facilitate mRNA translational regulation in response to envelope stress, environmental stress and changes in metabolite concentrations. Also binds with high specificity to tRNAs. The protein is RNA-binding protein Hfq of Aeromonas hydrophila subsp. hydrophila (strain ATCC 7966 / DSM 30187 / BCRC 13018 / CCUG 14551 / JCM 1027 / KCTC 2358 / NCIMB 9240 / NCTC 8049).